The primary structure comprises 875 residues: Neurotrypsin (875 aa).

The first 20 residues, 1-20 (MTLARFVLALVLGALPEVVX), serve as a signal peptide directing secretion. N26 carries N-linked (GlcNAc...) asparagine glycosylation. Residues 31–88 (HRPRHSPPTGPHYPYYLPTQQRPPRTRPPPPLPRFPRPPRALPAQRPHALQAGHTPRP) are disordered. A compositionally biased stretch (pro residues) spans 56-71 (TRPPPPLPRFPRPPRA). The 73-residue stretch at 93 to 165 (CPAGEPWVSV…GKVDWGYCDC (73 aa)) folds into the Kringle domain. 20 disulfide bridges follow: C93–C165, C109–C149, C138–C163, C195–C259, C208–C269, C239–C249, C305–C369, C318–C379, C349–C359, C412–C475, C425–C485, C455–C465, C525–C589, C538–C599, C569–C579, C619–C750, C661–C677, C765–C831, C794–C808, and C821–C850. SRCR domains follow at residues 170 to 271 (IRLR…TCSF), 280 to 381 (IRLV…SCTP), 387 to 487 (IRLA…ACYP), and 500 to 601 (VRLM…ICDY). The zymogen activation region stretch occupies residues 619 to 630 (CGLRLLHRRQKR). The 244-residue stretch at 631 to 874 (IIGGKNSLRG…FVPWIKSVTK (244 aa)) folds into the Peptidase S1 domain. H676 acts as the Charge relay system in catalysis. N683 carries N-linked (GlcNAc...) asparagine glycosylation. The active-site Charge relay system is the D726. The active-site Charge relay system is S825.

Belongs to the peptidase S1 family.

It localises to the secreted. Functionally, plays a role in neuronal plasticity and the proteolytic action may subserve structural reorganizations associated with learning and memory operations. The protein is Neurotrypsin (PRSS12) of Nomascus leucogenys (Northern white-cheeked gibbon).